The following is an 807-amino-acid chain: Tyrosine-protein kinase receptor torso (807 aa).

A signal peptide spans Met-1–Ser-28. Residues Gln-29–Trp-370 are Extracellular-facing. Disulfide bonds link Cys-46/Cys-61, Cys-81/Cys-203, Cys-210/Cys-239, and Cys-259/Cys-265. Residues Asn-54, Asn-171, Asn-183, and Asn-195 are each glycosylated (N-linked (GlcNAc...) asparagine). 3 N-linked (GlcNAc...) asparagine glycosylation sites follow: Asn-307, Asn-323, and Asn-344. Residues Val-371–Leu-391 form a helical membrane-spanning segment. The Cytoplasmic portion of the chain corresponds to Leu-392–Ala-807. Residues Val-439–Leu-738 enclose the Protein kinase domain. ATP is bound by residues Ile-445–Val-453 and Lys-468. Residue Asp-607 is the Proton acceptor of the active site.

The protein belongs to the protein kinase superfamily. Tyr protein kinase family. Homodimer; disulfide-linked. Mg(2+) is required as a cofactor. In terms of processing, may be auto-phosphorylated on tyrosine residues. At least one of the 3 cysteine residues Cys-381, Cys-393 or Cys-394 is involved in the formation of interchain disulfide bonds. The disulfide bond sites in the extracellular region are not involved in homodimer formation.

It is found in the cell membrane. The enzyme catalyses L-tyrosyl-[protein] + ATP = O-phospho-L-tyrosyl-[protein] + ADP + H(+). Its function is as follows. Probable receptor tyrosine kinase. During postembryonic development, involved in the initiation of metamorphosis probably by inducing the production of ecdysone in response to prothoracicotropic hormone (PTTH). Binding to PTTH stimulates activation of canonical MAPK signaling leading to ERK phosphorylation. This is Tyrosine-protein kinase receptor torso from Bombyx mori (Silk moth).